The following is a 150-amino-acid chain: Large ribosomal subunit protein bL9 (150 aa).

Belongs to the bacterial ribosomal protein bL9 family.

Its function is as follows. Binds to the 23S rRNA. The polypeptide is Large ribosomal subunit protein bL9 (Neisseria meningitidis serogroup B (strain ATCC BAA-335 / MC58)).